We begin with the raw amino-acid sequence, 316 residues long: Ribosomal RNA small subunit methyltransferase H (316 aa).

Residues 42–44 (GGH), Asp-62, Phe-86, Asp-104, and Gln-111 contribute to the S-adenosyl-L-methionine site.

Belongs to the methyltransferase superfamily. RsmH family.

Its subcellular location is the cytoplasm. It catalyses the reaction cytidine(1402) in 16S rRNA + S-adenosyl-L-methionine = N(4)-methylcytidine(1402) in 16S rRNA + S-adenosyl-L-homocysteine + H(+). Functionally, specifically methylates the N4 position of cytidine in position 1402 (C1402) of 16S rRNA. The sequence is that of Ribosomal RNA small subunit methyltransferase H from Polynucleobacter necessarius subsp. necessarius (strain STIR1).